A 562-amino-acid chain; its full sequence is Oxygen-dependent choline dehydrogenase (562 aa).

4–33 is an FAD binding site; it reads DYIIIGAGSAGNVLATRLTEDPNTSVLLLE. His473 (proton acceptor) is an active-site residue.

The protein belongs to the GMC oxidoreductase family. FAD is required as a cofactor.

Its subcellular location is the cell membrane. The enzyme catalyses choline + A = betaine aldehyde + AH2. The catalysed reaction is betaine aldehyde + NAD(+) + H2O = glycine betaine + NADH + 2 H(+). Its pathway is amine and polyamine biosynthesis; betaine biosynthesis via choline pathway; betaine aldehyde from choline (cytochrome c reductase route): step 1/1. In terms of biological role, involved in the biosynthesis of the osmoprotectant glycine betaine. Catalyzes the oxidation of choline to betaine aldehyde and betaine aldehyde to glycine betaine at the same rate. The polypeptide is Oxygen-dependent choline dehydrogenase (Escherichia coli O157:H7).